A 104-amino-acid chain; its full sequence is L-rhamnose mutarotase (104 aa).

Tyr18 is a substrate binding site. His22 functions as the Proton donor in the catalytic mechanism. Substrate-binding positions include Tyr41 and 76–77 (WW).

Belongs to the rhamnose mutarotase family. Homodimer.

Its subcellular location is the cytoplasm. It catalyses the reaction alpha-L-rhamnose = beta-L-rhamnose. It functions in the pathway carbohydrate metabolism; L-rhamnose metabolism. In terms of biological role, involved in the anomeric conversion of L-rhamnose. The protein is L-rhamnose mutarotase of Burkholderia cenocepacia (strain HI2424).